Reading from the N-terminus, the 526-residue chain is Seipin-2 (526 aa).

The interval 33-77 is disordered; sequence PIRSNSHQPSSLLRRRKSAHRRDLISSDIETEPSSSSDGFDVGEK. The segment covering 58–70 has biased composition (low complexity); sequence SSDIETEPSSSSD. Helical transmembrane passes span 195 to 215, 224 to 243, 258 to 278, and 483 to 503; these read SLLT…FDPF, FLMA…MNPF, FGWG…LLVS, and LFVW…LVCC.

The protein belongs to the seipin family. Expressed in seeds, seedlings, leaves, stems and roots. Not detected in flowers.

It localises to the endoplasmic reticulum membrane. In terms of biological role, involved in lipid metabolism and lipid droplet (LD) morphology, number, and size. Supports the formation of small-sized LDs and modulates triacylglycerol accumulation. Induces probably a reorganization of the endoplasmic reticulum into LD-forming domains. This chain is Seipin-2, found in Arabidopsis thaliana (Mouse-ear cress).